A 524-amino-acid polypeptide reads, in one-letter code: Ankyrin repeat-containing protein At5g02620 (524 aa).

8 ANK repeats span residues 16–45 (RDDT…GVEL), 55–84 (SGET…SVLA), 90–119 (NGFD…ELSF), 124–153 (SKTT…DLAA), 158–187 (NGKT…GMVT), 192–222 (KGQT…LINS), 226–255 (KGNT…VSRV), and 260–289 (SGET…QNAR). 4 helical membrane-spanning segments follow: residues 349–369 (AINS…AAIF), 399–419 (FLIF…VVVV), 441–461 (LMWM…FVVV), and 472–492 (VTAI…YWVI). A Phosphoserine modification is found at S508.

The protein resides in the membrane. This Arabidopsis thaliana (Mouse-ear cress) protein is Ankyrin repeat-containing protein At5g02620.